The following is a 237-amino-acid chain: Golgi to ER traffic protein 1 (237 aa).

Over 1–4 (MDSG) the chain is Lumenal. A helical membrane pass occupies residues 5-24 (GWIVYCCIFFILLGKVLEYT). The Cytoplasmic segment spans residues 25–110 (SSYQDKWFTK…SSKKVFGRVK (86 aa)). The stretch at 40-99 (EARKLNSQYHELLSERLRLQEENHSISAQDNYARWTKNNRKLGELDKKLGTIRDKLQETN) forms a coiled coil. Residues 111-131 (LIGLTIPFWILKIWQRSHVVY) form a helical membrane-spanning segment. Over 132–176 (HFPKQDLFPKLVTGVWARGWLYLALGPLQYLRNGSLNIQDYAPHG) the chain is Lumenal. The chain crosses the membrane as a helical span at residues 177–193 (VSLGIWIWALQATINTL). Residues 194 to 237 (EFLVKQVILEKPVSPPPQKSKSATKAETKRPEKLEITDDKVELD) lie on the Cytoplasmic side of the membrane. The interval 205–237 (PVSPPPQKSKSATKAETKRPEKLEITDDKVELD) is disordered. Residues 217–237 (TKAETKRPEKLEITDDKVELD) are compositionally biased toward basic and acidic residues.

It belongs to the WRB/GET1 family. In terms of assembly, component of the Golgi to ER traffic (GET) complex, which is composed of GET1, GET2 and GET3. Within the complex, GET1 and GET2 form a heterotetramer which is stabilized by phosphatidylinositol binding and which binds to the GET3 homodimer.

The protein localises to the endoplasmic reticulum membrane. Its subcellular location is the golgi apparatus membrane. Its function is as follows. Required for the post-translational delivery of tail-anchored (TA) proteins to the endoplasmic reticulum. Together with GET2, acts as a membrane receptor for soluble GET3, which recognizes and selectively binds the transmembrane domain of TA proteins in the cytosol. The GET complex cooperates with the HDEL receptor ERD2 to mediate the ATP-dependent retrieval of resident ER proteins that contain a C-terminal H-D-E-L retention signal from the Golgi to the ER. This Zygosaccharomyces rouxii (strain ATCC 2623 / CBS 732 / NBRC 1130 / NCYC 568 / NRRL Y-229) protein is Golgi to ER traffic protein 1.